The chain runs to 170 residues: Large ribosomal subunit protein bL17 (170 aa).

This sequence belongs to the bacterial ribosomal protein bL17 family. As to quaternary structure, part of the 50S ribosomal subunit. Contacts protein L32.

In Azobacteroides pseudotrichonymphae genomovar. CFP2, this protein is Large ribosomal subunit protein bL17.